Here is a 278-residue protein sequence, read N- to C-terminus: Elongation factor Ts (278 aa).

The segment at 79–82 (TDFV) is involved in Mg(2+) ion dislocation from EF-Tu.

Belongs to the EF-Ts family.

The protein localises to the cytoplasm. In terms of biological role, associates with the EF-Tu.GDP complex and induces the exchange of GDP to GTP. It remains bound to the aminoacyl-tRNA.EF-Tu.GTP complex up to the GTP hydrolysis stage on the ribosome. This is Elongation factor Ts from Borrelia duttonii (strain Ly).